Consider the following 70-residue polypeptide: ATP synthase subunit c (70 aa).

The next 2 membrane-spanning stretches (helical) occupy residues 3 to 23 (FIAA…GNGM) and 47 to 67 (FIGV…AFML).

This sequence belongs to the ATPase C chain family. F-type ATPases have 2 components, F(1) - the catalytic core - and F(0) - the membrane proton channel. F(1) has five subunits: alpha(3), beta(3), gamma(1), delta(1), epsilon(1). F(0) has three main subunits: a(1), b(2) and c(10-14). The alpha and beta chains form an alternating ring which encloses part of the gamma chain. F(1) is attached to F(0) by a central stalk formed by the gamma and epsilon chains, while a peripheral stalk is formed by the delta and b chains.

The protein resides in the cell membrane. Functionally, f(1)F(0) ATP synthase produces ATP from ADP in the presence of a proton or sodium gradient. F-type ATPases consist of two structural domains, F(1) containing the extramembraneous catalytic core and F(0) containing the membrane proton channel, linked together by a central stalk and a peripheral stalk. During catalysis, ATP synthesis in the catalytic domain of F(1) is coupled via a rotary mechanism of the central stalk subunits to proton translocation. Its function is as follows. Key component of the F(0) channel; it plays a direct role in translocation across the membrane. A homomeric c-ring of between 10-14 subunits forms the central stalk rotor element with the F(1) delta and epsilon subunits. In Lacticaseibacillus casei (strain BL23) (Lactobacillus casei), this protein is ATP synthase subunit c.